The following is a 163-amino-acid chain: Bacterial ISG15-like ubiquitin-like protein BilA (163 aa).

Ubiquitin-like BIL-type domains lie at 4-80 and 81-163; these read LVVF…RCKR and IRAT…RIEG. A Glycyl lysine isopeptide (Gly-Lys) (interchain with K-? in central tail fiber acceptor protein) cross-link involves residue Gly163.

Component of the Bil (bacterial ISG15-like) antiviral defense system, composed of BilA, BilB, BilC and BilD. The Bil system specifically conjugates a ubiquitin-like moiety (bilA) to the bacteriophage central tail fiber (CTF, or tip attachment protein J) via reactions involving E1 (bilD) and E2 (bilB). Modifies CTF of phage SECphi27 and SECphi4, which probably interferes with assembly of the phage tail. Also modifies T5 baseplate hub protein pb3 (gene D16), but not gp27 of phage T6 (Bil defends against T6). Bil-encoding bacteria produce mostly defective phage SECphi27, many of which have phage assembly defects, including no tails. SECphi27 phage progeny produced in E.coli with the Bil system inject less DNA into naive host cells, maybe because the phage are less able to adsorb and inject their DNA into host cells. Its function is as follows. Expression of the Bil system in E.coli (strain MG1655) confers about 100-fold resistance to phage SECphi27, SECphi18, SECphi6, SECphi4 and T5, but not to SECphi17. When cells expressing the Bil system are infected by phage SECphi27 at low multiplicity of infection (0.03 MOI) the culture survives, at 3.0 MOI the culture collapses at the same time as cells without the Bil system. The chain is Bacterial ISG15-like ubiquitin-like protein BilA from Collimonas sp. (strain OK412).